Here is a 198-residue protein sequence, read N- to C-terminus: Recombination protein RecR (198 aa).

The C4-type zinc finger occupies 57–72 (CSICGNLTDDDPCHIC). Positions 80 to 175 (ETILVVEASK…KVTRLARGLA (96 aa)) constitute a Toprim domain.

This sequence belongs to the RecR family.

Functionally, may play a role in DNA repair. It seems to be involved in an RecBC-independent recombinational process of DNA repair. It may act with RecF and RecO. In Streptococcus equi subsp. zooepidemicus (strain MGCS10565), this protein is Recombination protein RecR.